The sequence spans 1002 residues: TOG array regulator of axonemal microtubules protein 2 (1002 aa).

Disordered stretches follow at residues 54-74 (SSVL…EDQS), 131-214 (KRRL…SAQE), 332-351 (ETRS…KVQV), 402-421 (PLRG…PRRN), and 426-450 (LQRK…GFAR).

This sequence belongs to the Crescerin family.

This is TOG array regulator of axonemal microtubules protein 2 (Togaram2) from Mus musculus (Mouse).